We begin with the raw amino-acid sequence, 496 residues long: Glycerol kinase (496 aa).

Threonine 11 is an ADP binding site. Residues threonine 11, threonine 12, and serine 13 each contribute to the ATP site. Threonine 11 is a sn-glycerol 3-phosphate binding site. An ADP-binding site is contributed by arginine 15. Sn-glycerol 3-phosphate is bound by residues arginine 81, glutamate 82, tyrosine 133, and aspartate 242. Glycerol is bound by residues arginine 81, glutamate 82, tyrosine 133, aspartate 242, and glutamine 243. Positions 264 and 307 each coordinate ADP. ATP-binding residues include threonine 264, glycine 307, glutamine 311, and glycine 408. ADP-binding residues include glycine 408 and asparagine 412.

The protein belongs to the FGGY kinase family.

The enzyme catalyses glycerol + ATP = sn-glycerol 3-phosphate + ADP + H(+). The protein operates within polyol metabolism; glycerol degradation via glycerol kinase pathway; sn-glycerol 3-phosphate from glycerol: step 1/1. Inhibited by fructose 1,6-bisphosphate (FBP). Functionally, key enzyme in the regulation of glycerol uptake and metabolism. Catalyzes the phosphorylation of glycerol to yield sn-glycerol 3-phosphate. This chain is Glycerol kinase, found in Trichlorobacter lovleyi (strain ATCC BAA-1151 / DSM 17278 / SZ) (Geobacter lovleyi).